Here is a 483-residue protein sequence, read N- to C-terminus: Altronate oxidoreductase (483 aa).

18–29 (IIQFGEGNFLRA) is a binding site for NAD(+).

This sequence belongs to the mannitol dehydrogenase family. UxaB subfamily.

It carries out the reaction D-altronate + NAD(+) = keto-D-tagaturonate + NADH + H(+). It participates in carbohydrate metabolism; pentose and glucuronate interconversion. This is Altronate oxidoreductase from Yersinia enterocolitica serotype O:8 / biotype 1B (strain NCTC 13174 / 8081).